Consider the following 469-residue polypeptide: 3-isopropylmalate dehydratase large subunit (469 aa).

Cys-347, Cys-410, and Cys-413 together coordinate [4Fe-4S] cluster.

This sequence belongs to the aconitase/IPM isomerase family. LeuC type 1 subfamily. Heterodimer of LeuC and LeuD. It depends on [4Fe-4S] cluster as a cofactor.

The enzyme catalyses (2R,3S)-3-isopropylmalate = (2S)-2-isopropylmalate. It participates in amino-acid biosynthesis; L-leucine biosynthesis; L-leucine from 3-methyl-2-oxobutanoate: step 2/4. Functionally, catalyzes the isomerization between 2-isopropylmalate and 3-isopropylmalate, via the formation of 2-isopropylmaleate. The chain is 3-isopropylmalate dehydratase large subunit from Burkholderia pseudomallei (strain 1106a).